The following is a 198-amino-acid chain: Neutrophil gelatinase-associated lipocalin (198 aa).

The first 20 residues, 1 to 20 (MGLGVLCLALVLLGVLQSQA), serve as a signal peptide directing secretion. Glutamine 21 is modified (pyrrolidone carboxylic acid). 72 to 74 (YST) is a binding site for a carboxymycobactin. Asparagine 85 carries N-linked (GlcNAc...) asparagine glycosylation. An intrachain disulfide couples cysteine 96 to cysteine 195. Tyrosine 126 is an enterobactin binding site. A carboxymycobactin-binding residues include lysine 145, lysine 154, and tyrosine 158. Position 154 (lysine 154) interacts with enterobactin.

This sequence belongs to the calycin superfamily. Lipocalin family. Monomer. Homodimer; disulfide-linked. Heterodimer; disulfide-linked with MMP9. In terms of tissue distribution, detected in the ureteric bud in embryonic kidney (at protein level).

It is found in the secreted. It localises to the cytoplasmic granule lumen. The protein localises to the cytoplasmic vesicle lumen. Its function is as follows. Iron-trafficking protein involved in multiple processes such as apoptosis, innate immunity and renal development. Binds iron through association with 2,3-dihydroxybenzoic acid (2,3-DHBA), a siderophore that shares structural similarities with bacterial enterobactin, and delivers or removes iron from the cell, depending on the context. Iron-bound form (holo-24p3) is internalized following binding to the SLC22A17 (24p3R) receptor, leading to release of iron and subsequent increase of intracellular iron concentration. In contrast, association of the iron-free form (apo-24p3) with the SLC22A17 (24p3R) receptor is followed by association with an intracellular siderophore, iron chelation and iron transfer to the extracellular medium, thereby reducing intracellular iron concentration. Involved in apoptosis due to interleukin-3 (IL3) deprivation: iron-loaded form increases intracellular iron concentration without promoting apoptosis, while iron-free form decreases intracellular iron levels, inducing expression of the proapoptotic protein BCL2L11/BIM, resulting in apoptosis. Involved in innate immunity; limits bacterial proliferation by sequestering iron bound to microbial siderophores, such as enterobactin. Can also bind siderophores from M.tuberculosis. This is Neutrophil gelatinase-associated lipocalin (Lcn2) from Rattus norvegicus (Rat).